Here is a 111-residue protein sequence, read N- to C-terminus: MESNRGSQNGIQLLLGAEQEAQHIVNAARTGKQARMKQAKEEAEKEIAEFRAYMEAEFQRNVEQTSGDSGANVKRLEQETFAKIQHLKTEAESISHDVVQMLLRQVTTVKN.

The protein belongs to the V-ATPase G subunit family. In terms of assembly, V-ATPase is a heteromultimeric enzyme composed of a peripheral catalytic V1 complex (components A to H) attached to an integral membrane V0 proton pore complex (components: a, c, c', c'' and d).

In terms of biological role, catalytic subunit of the peripheral V1 complex of vacuolar ATPase (V-ATPase). V-ATPase is responsible for acidifying a variety of intracellular compartments in eukaryotic cells. This is V-type proton ATPase subunit G 2 (VATG2) from Nicotiana tabacum (Common tobacco).